The chain runs to 361 residues: Bis(monoacylglycero)phosphate synthase CLN5 (361 aa).

Residues 1–21 (MAQAGGAGAGAWGRRGAGAGA) are compositionally biased toward gly residues. Positions 1–24 (MAQAGGAGAGAWGRRGAGAGAGPE) are disordered. The Cytoplasmic portion of the chain corresponds to 1-30 (MAQAGGAGAGAWGRRGAGAGAGPERAPWRW). Residues 31–48 (APALLWLAAATAAAAAAG) traverse the membrane as a helical; Signal-anchor for type II membrane protein segment. At 49 to 361 (DPSRRQWPVP…NRKNRTLSGL (313 aa)) the chain is on the lumenal side. Disulfide bonds link C72/C161 and C79/C167. Catalysis depends on H119, which acts as the Proton acceptor. N132, N145, N180, and N205 each carry an N-linked (GlcNAc...) asparagine glycan. C233 serves as the catalytic Nucleophile; Acyl-thioester intermediate. 3 N-linked (GlcNAc...) asparagine glycosylation sites follow: N257, N273, and N283. The segment at 306-345 (FLLSLLQIFDAVVIHREFYLFYNFEYWFLPMKSPFIKITY) is membrane-anchoring. The N-linked (GlcNAc...) asparagine glycan is linked to N355.

The protein belongs to the CLN5 family. Multimer. Interacts with SORT1, RAB5A and RAB7A. Interacts with PPT1, TPP1, CLN3, CLN6, CLN8, ATP5F1A and ATP5F1B. N-glycosylated with both high mannose and complex type sugars. Glycosylation is important for proper folding and trafficking to the lysosomes. In terms of processing, the type II membrane signal anchor is proteolytically cleaved to produce a mature form that is transported to the lysosomes (Bis(monoacylglycero)phosphate synthase CLN5, secreted form). Post-translationally, can undergo proteolytic cleavage at the C-terminus, probably by a cysteine protease and may involve the removal of approximately 10-15 residues from the C-terminal end.

It localises to the lysosome. The protein localises to the membrane. The enzyme catalyses S-hexadecanoyl-L-cysteinyl-[protein] + H2O = L-cysteinyl-[protein] + hexadecanoate + H(+). The catalysed reaction is 2 1-acyl-sn-glycero-3-phospho-(1'-sn-glycerol) = 1-acyl-sn-glycero-3-phospho-(3'-acyl-sn-1'-glycerol) + sn-glycero-3-phospho-(1'-sn-glycerol). It catalyses the reaction 2 1-(9Z-octadecenoyl)-sn-glycero-3-phospho-(1'-sn-glycerol) = 1-(9Z-octadecenoyl)-sn-glycero-3-phospho-(3'-(9Z-octadecenoyl)-1'-sn-glycerol) + sn-glycero-3-phospho-(1'-sn-glycerol). It carries out the reaction 2 1-octadecanoyl-sn-glycero-3-phospho-(1'-sn-glycerol) = 1-octadecanoyl-sn-glycero-3-phospho-(3'-octadecanoyl-1'-sn-glycerol) + sn-glycero-3-phospho-(1'-sn-glycerol). The enzyme catalyses 2 1-hexadecanoyl-sn-glycero-3-phospho-(1'-sn-glycerol) = 1-hexadecanoyl-sn-glycero-3-phospho-(3'-hexadecanoyl-1'-sn-glycerol) + sn-glycero-3-phospho-(1'-sn-glycerol). The catalysed reaction is 2 1-tetradecanoyl-sn-glycero-3-phospho-(1'-sn-glycerol) = 1-tetradecanoyl-sn-glycero-3-phospho-(3'-tetradecanoyl-1'-sn-glycerol) + sn-glycero-3-phospho-(1'-sn-glycerol). Functionally, catalyzes the synthesis of bis(monoacylglycero)phosphate (BMP) via transacylation of 2 molecules of lysophosphatidylglycerol (LPG). BMP also known as lysobisphosphatidic acid plays a key role in the formation of intraluminal vesicles and in maintaining intracellular cholesterol homeostasis. Can use only LPG as the exclusive lysophospholipid acyl donor for base exchange and displays BMP synthase activity towards various LPGs (LPG 14:0, LPG 16:0, LPG 18:0, LPG 18:1) with a higher preference for longer chain lengths. Plays a role in influencing the retrograde trafficking of lysosomal sorting receptors SORT1 and IGF2R from the endosomes to the trans-Golgi network by controlling the recruitment of retromer complex to the endosomal membrane. Regulates the localization and activation of RAB7A which is required to recruit the retromer complex to the endosomal membrane. Exhibits palmitoyl protein thioesterase (S-depalmitoylation) activity in vitro and most likely plays a role in protein S-depalmitoylation. In Ovis aries (Sheep), this protein is Bis(monoacylglycero)phosphate synthase CLN5 (CLN5).